A 202-amino-acid chain; its full sequence is Probable adenylyl-sulfate kinase (202 aa).

36–43 (GLSGSGKS) is an ATP binding site. The Phosphoserine intermediate role is filled by Ser110.

The protein belongs to the APS kinase family.

It catalyses the reaction adenosine 5'-phosphosulfate + ATP = 3'-phosphoadenylyl sulfate + ADP + H(+). It participates in sulfur metabolism; hydrogen sulfide biosynthesis; sulfite from sulfate: step 2/3. In terms of biological role, catalyzes the synthesis of activated sulfate. The polypeptide is Probable adenylyl-sulfate kinase (Halalkalibacterium halodurans (strain ATCC BAA-125 / DSM 18197 / FERM 7344 / JCM 9153 / C-125) (Bacillus halodurans)).